A 130-amino-acid chain; its full sequence is Histone H2A type 1 (130 aa).

Residues 1–22 (MSGRGKQGGKARAKAKSRSSRA) are disordered. Ser2 is subject to N-acetylserine. At Ser2 the chain carries Phosphoserine; by RPS6KA5. Residue Arg4 is modified to Citrulline; alternate. Arg4 is subject to Symmetric dimethylarginine; by PRMT5; alternate. Lys6 bears the N6-(2-hydroxyisobutyryl)lysine mark. Positions 7–19 (QGGKARAKAKSRS) are enriched in basic residues. The residue at position 10 (Lys10) is an N6-(2-hydroxyisobutyryl)lysine; alternate. At Lys10 the chain carries N6-lactoyllysine; alternate. The residue at position 10 (Lys10) is an N6-succinyllysine; alternate. Residues Lys14 and Lys16 each participate in a glycyl lysine isopeptide (Lys-Gly) (interchain with G-Cter in ubiquitin) cross-link. N6-(2-hydroxyisobutyryl)lysine; alternate is present on Lys37. Lys37 is subject to N6-(beta-hydroxybutyryl)lysine; alternate. Position 37 is an N6-crotonyllysine; alternate (Lys37). An N6-(2-hydroxyisobutyryl)lysine mark is found at Lys75 and Lys76. Lys96 carries the post-translational modification N6-(2-hydroxyisobutyryl)lysine; alternate. Lys96 bears the N6-succinyllysine; alternate mark. Lys96 carries the post-translational modification N6-glutaryllysine; alternate. Lys100 carries the post-translational modification N6-glutaryllysine. Gln105 carries the post-translational modification N5-methylglutamine. At Lys119 the chain carries N6-(2-hydroxyisobutyryl)lysine; alternate. 2 positions are modified to N6-crotonyllysine; alternate: Lys119 and Lys120. N6-glutaryllysine; alternate is present on residues Lys119 and Lys120. A Glycyl lysine isopeptide (Lys-Gly) (interchain with G-Cter in ubiquitin); alternate cross-link involves residue Lys120. A Phosphothreonine; by DCAF1 modification is found at Thr121. Lys126 bears the N6-crotonyllysine; alternate mark. Lys126 bears the N6-glutaryllysine; alternate mark.

It belongs to the histone H2A family. In terms of assembly, the nucleosome is a histone octamer containing two molecules each of H2A, H2B, H3 and H4 assembled in one H3-H4 heterotetramer and two H2A-H2B heterodimers. The octamer wraps approximately 147 bp of DNA. Interacts with VRK1; the interaction is mediated by the nucleosome acidic patch, a cluster of negatively charged residues of H2A and H2B forming a cleft within the nucleosome core. In terms of processing, deiminated on Arg-4 in granulocytes upon calcium entry. Monoubiquitination of Lys-120 (H2AK119Ub) by RING1, TRIM37 and RNF2/RING2 complex gives a specific tag for epigenetic transcriptional repression and participates in X chromosome inactivation of female mammals. It is involved in the initiation of both imprinted and random X inactivation. Ubiquitinated H2A is enriched in inactive X chromosome chromatin. Ubiquitination of H2A functions downstream of methylation of 'Lys-27' of histone H3 (H3K27me). H2AK119Ub by RNF2/RING2 can also be induced by ultraviolet and may be involved in DNA repair. Following DNA double-strand breaks (DSBs), it is ubiquitinated through 'Lys-63' linkage of ubiquitin moieties by the E2 ligase UBE2N and the E3 ligases RNF8 and RNF168, leading to the recruitment of repair proteins to sites of DNA damage. Ubiquitination at Lys-14 and Lys-16 (H2AK13Ub and H2AK15Ub, respectively) in response to DNA damage is initiated by RNF168 that mediates monoubiquitination at these 2 sites, and 'Lys-63'-linked ubiquitin are then conjugated to monoubiquitin; RNF8 is able to extend 'Lys-63'-linked ubiquitin chains in vitro. H2AK119Ub and ionizing radiation-induced 'Lys-63'-linked ubiquitination (H2AK13Ub and H2AK15Ub) are distinct events. Post-translationally, phosphorylation on Ser-2 (H2AS1ph) is enhanced during mitosis. Phosphorylation on Ser-2 by RPS6KA5/MSK1 directly represses transcription. Acetylation of H3 inhibits Ser-2 phosphorylation by RPS6KA5/MSK1. Phosphorylation at Thr-121 (H2AT120ph) by DCAF1 is present in the regulatory region of many tumor suppresor genes and down-regulates their transcription. In terms of processing, symmetric dimethylation on Arg-4 by the PRDM1/PRMT5 complex may play a crucial role in the germ-cell lineage. Glutamine methylation at Gln-105 (H2AQ104me) by FBL is specifically dedicated to polymerase I. It is present at 35S ribosomal DNA locus and impairs binding of the FACT complex. Post-translationally, crotonylation (Kcr) is specifically present in male germ cells and marks testis-specific genes in post-meiotic cells, including X-linked genes that escape sex chromosome inactivation in haploid cells. Crotonylation marks active promoters and enhancers and confers resistance to transcriptional repressors. It is also associated with post-meiotically activated genes on autosomes. In terms of processing, lactylated in macrophages by EP300/P300 by using lactoyl-CoA directly derived from endogenous or exogenous lactate, leading to stimulates gene transcription.

The protein resides in the nucleus. It is found in the chromosome. In terms of biological role, core component of nucleosome. Nucleosomes wrap and compact DNA into chromatin, limiting DNA accessibility to the cellular machineries which require DNA as a template. Histones thereby play a central role in transcription regulation, DNA repair, DNA replication and chromosomal stability. DNA accessibility is regulated via a complex set of post-translational modifications of histones, also called histone code, and nucleosome remodeling. This Rattus norvegicus (Rat) protein is Histone H2A type 1.